The sequence spans 1462 residues: FYVE, RhoGEF and PH domain-containing protein 5 (1462 aa).

6 disordered regions span residues Gly-37–Glu-323, Tyr-492–Ile-512, Ser-592–Val-613, His-670–Ser-718, Glu-746–Ile-777, and Cys-851–Val-887. Basic and acidic residues predominate over residues Pro-72–Gly-82. Acidic residues-rich tracts occupy residues Ser-95 to Gly-106 and Glu-137 to Ala-151. Residues Ser-161–Ser-177 are compositionally biased toward basic and acidic residues. Acidic residues-rich tracts occupy residues Gly-211 to Gly-220 and Met-242 to Glu-255. Residues Ser-592 to Ser-611 are compositionally biased toward polar residues. Positions Ser-676 to Ser-685 are enriched in low complexity. A compositionally biased stretch (basic and acidic residues) spans Pro-858–Val-887. In terms of domain architecture, DH spans Arg-892 to Ser-1084. A PH 1 domain is found at Glu-1113–Pro-1207. An FYVE-type zinc finger spans residues Val-1242–Lys-1301. The Zn(2+) site is built by Cys-1248, Cys-1251, Cys-1264, Cys-1267, Cys-1272, Cys-1275, Cys-1293, and Cys-1296. The 99-residue stretch at Gly-1363–Val-1461 folds into the PH 2 domain.

As to expression, expressed in endothelial cells (at protein level).

It localises to the cytoplasm. Its subcellular location is the cytoskeleton. The protein localises to the cell projection. The protein resides in the ruffle membrane. It is found in the endoplasmic reticulum. It localises to the golgi apparatus. Its subcellular location is the early endosome. Functionally, activates CDC42, a member of the Ras-like family of Rho- and Rac proteins, by exchanging bound GDP for free GTP. Mediates VEGF-induced CDC42 activation. May regulate proangiogenic action of VEGF in vascular endothelial cells, including network formation, directional movement and proliferation. May play a role in regulating the actin cytoskeleton and cell shape. The sequence is that of FYVE, RhoGEF and PH domain-containing protein 5 (FGD5) from Homo sapiens (Human).